Consider the following 1048-residue polypeptide: Anguibactin system regulator (1048 aa).

One can recognise a Carrier domain in the interval 965 to 1039 (PIITASEDRV…AFAIIMDRCR (75 aa)).

It belongs to the ATP-dependent AMP-binding enzyme family.

The protein operates within siderophore biosynthesis; anguibactin biosynthesis. Functionally, bifunctional protein that plays an essential role in virulence. Plays a role in both the production of the siderophore anguibactin and the regulation of iron transport genes. This chain is Anguibactin system regulator (angR), found in Vibrio anguillarum (Listonella anguillarum).